The following is a 389-amino-acid chain: Anhydro-N-acetylmuramic acid kinase (389 aa).

Position 11–18 (11–18) interacts with ATP; sequence GTSLDGVD.

The protein belongs to the anhydro-N-acetylmuramic acid kinase family.

It catalyses the reaction 1,6-anhydro-N-acetyl-beta-muramate + ATP + H2O = N-acetyl-D-muramate 6-phosphate + ADP + H(+). It functions in the pathway amino-sugar metabolism; 1,6-anhydro-N-acetylmuramate degradation. It participates in cell wall biogenesis; peptidoglycan recycling. Catalyzes the specific phosphorylation of 1,6-anhydro-N-acetylmuramic acid (anhMurNAc) with the simultaneous cleavage of the 1,6-anhydro ring, generating MurNAc-6-P. Is required for the utilization of anhMurNAc either imported from the medium or derived from its own cell wall murein, and thus plays a role in cell wall recycling. This Albidiferax ferrireducens (strain ATCC BAA-621 / DSM 15236 / T118) (Rhodoferax ferrireducens) protein is Anhydro-N-acetylmuramic acid kinase.